The chain runs to 234 residues: Arsenate respiratory reductase iron-sulfur subunit ArrB (234 aa).

4Fe-4S ferredoxin-type domains lie at L3–I32, V48–R79, and G80–A109. 16 residues coordinate [4Fe-4S] cluster: C12, C15, C18, C22, C57, C60, C65, C69, C89, C92, C95, C99, C164, C167, C179, and C183.

In terms of assembly, heterodimer composed of one large subunit (ArrA) and one small subunit (ArrB). It depends on [4Fe-4S] cluster as a cofactor.

The protein resides in the periplasm. Its activity is regulated as follows. Phosphate is a competitive inhibitor. In terms of biological role, component of the arsenate respiratory reductase (Arr) complex, which catalyzes the reduction of arsenate (As(V)) to arsenite (As(III)). ArrB is probably the electron transfer subunit. The periplasmic localization of this complex may allow the cell to couple arsenate reduction to energy production before arsenate can be transported to the cell cytoplasm and enter the ars detoxification pathway, an energy-requiring process. This chain is Arsenate respiratory reductase iron-sulfur subunit ArrB, found in Shewanella sp. (strain ANA-3).